A 367-amino-acid polypeptide reads, in one-letter code: GTP cyclohydrolase FolE2 (367 aa).

This sequence belongs to the GTP cyclohydrolase IV family.

It carries out the reaction GTP + H2O = 7,8-dihydroneopterin 3'-triphosphate + formate + H(+). It participates in cofactor biosynthesis; 7,8-dihydroneopterin triphosphate biosynthesis; 7,8-dihydroneopterin triphosphate from GTP: step 1/1. In terms of biological role, converts GTP to 7,8-dihydroneopterin triphosphate. The protein is GTP cyclohydrolase FolE2 of Ruegeria pomeroyi (strain ATCC 700808 / DSM 15171 / DSS-3) (Silicibacter pomeroyi).